The primary structure comprises 168 residues: Photosystem I assembly protein Ycf3 (168 aa).

TPR repeat units lie at residues 35–68 (AFTY…EIDP), 72–105 (SYIL…NPFL), and 120–153 (GEQA…TPGN).

The protein belongs to the Ycf3 family.

It localises to the plastid. Its subcellular location is the chloroplast thylakoid membrane. Essential for the assembly of the photosystem I (PSI) complex. May act as a chaperone-like factor to guide the assembly of the PSI subunits. In Ipomoea purpurea (Common morning glory), this protein is Photosystem I assembly protein Ycf3.